The following is a 108-amino-acid chain: Translation initiation factor 1A (108 aa).

The 75-residue stretch at 11-85 folds into the S1-like domain; sequence PSRDVPRPEE…NRCDILYKYG (75 aa).

The protein belongs to the eIF-1A family.

Seems to be required for maximal rate of protein biosynthesis. Enhances ribosome dissociation into subunits and stabilizes the binding of the initiator Met-tRNA(I) to 40 S ribosomal subunits. The sequence is that of Translation initiation factor 1A (eIF1A) from Saccharolobus solfataricus (strain ATCC 35092 / DSM 1617 / JCM 11322 / P2) (Sulfolobus solfataricus).